The following is a 306-amino-acid chain: Mitochondrial brown fat uncoupling protein 1 (306 aa).

Residues 1–10 (MVGTTATDVA) lie on the Mitochondrial intermembrane side of the membrane. The chain crosses the membrane as a helical span at residues 11 to 32 (PTMGVKIFSAGVAACLADVITF). Solcar repeat units follow at residues 11–102 (PTMG…VQEF), 110–200 (PSLR…MKGA), and 209–294 (DDVP…LKRE). Topologically, residues 33 to 73 (PLDTAKVRLQIQGECQTTSGIRYKGVLGTITTLAKTEGPLK) are mitochondrial matrix. Lys56 serves as a coordination point for fatty acid 16:0. A helical transmembrane segment spans residues 74 to 96 (LYSGLPAGLQRQISFASLRIGLY). The Mitochondrial intermembrane segment spans residues 97-115 (DTVQEFWGGEEATPSLRSK). The helical transmembrane segment at 116–132 (ICAGLTTGGVAVFIGQP) threads the bilayer. The Mitochondrial matrix segment spans residues 133–177 (TEVVKVRLQAQSHLHGLKPRYTGTYNAYRIIATTESLSTLWKGTT). A helical membrane pass occupies residues 178 to 194 (PNLLRNIIINCTELVTY). The Mitochondrial intermembrane segment spans residues 195–211 (DLMKGALVRNDILADDV). A helical transmembrane segment spans residues 212–231 (PCHLLSALIAGFCTTLLSSP). Topologically, residues 232-265 (VDVVKTRFINSPQGQYTSVPSCAMSMLTKEGPTA) are mitochondrial matrix. Cys253 is modified (cysteine sulfenic acid (-SOH)). A helical transmembrane segment spans residues 266–288 (FFKGFAPSFLRLASWNVIMFVCF). Lys268 lines the fatty acid 16:0 pocket. The Mitochondrial intermembrane segment spans residues 289–306 (EKLKRELMKSRQTVDCAT).

The protein belongs to the mitochondrial carrier (TC 2.A.29) family. As to quaternary structure, most probably functions as a monomer. Binds one purine nucleotide per monomer. However, has also been suggested to function as a homodimer or a homotetramer. Tightly associates with cardiolipin in the mitochondrion inner membrane; may stabilize and regulate its activity. May undergo sulfenylation upon cold exposure. May increase the sensitivity of UCP1 thermogenic function to the activation by noradrenaline probably through structural effects. In terms of processing, may undergo ubiquitin-mediated proteasomal degradation.

It localises to the mitochondrion inner membrane. The enzyme catalyses H(+)(in) = H(+)(out). Its activity is regulated as follows. Has no constitutive proton transporter activity and has to be activated by long-chain fatty acids/LCFAs. Inhibited by purine nucleotides. Both purine nucleotides and LCFAs bind the cytosolic side of the transporter and directly compete to activate or inhibit it. Activated by noradrenaline and reactive oxygen species. Despite lacking canonical translational encoding for selenocysteine, a small pool of the protein has been observed to selectively incorporate selenocysteine at 'Cys-253'. Selenocysteine-modified protein is highly sensitive to redox modification and may constitute a pool of protein highly sensitive to activation by elevated levels of reactive oxygen species (ROS). Its function is as follows. Mitochondrial protein responsible for thermogenic respiration, a specialized capacity of brown adipose tissue and beige fat that participates in non-shivering adaptive thermogenesis to temperature and diet variations and more generally to the regulation of energy balance. Functions as a long-chain fatty acid/LCFA and proton symporter, simultaneously transporting one LCFA and one proton through the inner mitochondrial membrane. However, LCFAs remaining associated with the transporter via their hydrophobic tails, it results in an apparent transport of protons activated by LCFAs. Thereby, dissipates the mitochondrial proton gradient and converts the energy of substrate oxydation into heat instead of ATP. Regulates the production of reactive oxygen species/ROS by mitochondria. The protein is Mitochondrial brown fat uncoupling protein 1 of Ochotona dauurica (Daurian pika).